We begin with the raw amino-acid sequence, 132 residues long: Histone H2B.9 (132 aa).

Positions 1–11 (MAPKAEKKPAE) are enriched in basic and acidic residues. Residues 1–41 (MAPKAEKKPAEKAPAPKAEKKIAKEGGTSEIVKKKKKTKKS) are disordered. N,N,N-trimethylalanine; alternate is present on Ala2. A N,N-dimethylalanine; alternate modification is found at Ala2. Ala2 bears the N-methylalanine; alternate mark. Lys4 carries the post-translational modification N6-methyllysine. N6-acetyllysine is present on residues Lys7, Lys12, Lys20, and Lys21. A Glycyl lysine isopeptide (Lys-Gly) (interchain with G-Cter in ubiquitin) cross-link involves residue Lys128.

The protein belongs to the histone H2B family. In terms of assembly, the nucleosome is a histone octamer containing two molecules each of H2A, H2B, H3 and H4 assembled in one H3-H4 heterotetramer and two H2A-H2B heterodimers. The octamer wraps approximately 147 bp of DNA. Can be acetylated to form H2BK6ac, H2BK33ac and H2BK34ac. Post-translationally, monoubiquitinated by BRE1 to form H2BK143ub1 and deubiquitinated by UBP26. Required for heterochromatic histone H3 di- and trimethylation at H3K4me. May give a specific tag for epigenetic transcriptional activation.

It localises to the nucleus. Its subcellular location is the chromosome. Its function is as follows. Core component of nucleosome. Nucleosomes wrap and compact DNA into chromatin, limiting DNA accessibility to the cellular machineries which require DNA as a template. Histones thereby play a central role in transcription regulation, DNA repair, DNA replication and chromosomal stability. DNA accessibility is regulated via a complex set of post-translational modifications of histones, also called histone code, and nucleosome remodeling. The protein is Histone H2B.9 of Arabidopsis thaliana (Mouse-ear cress).